A 210-amino-acid chain; its full sequence is Glutathione S-transferase P (210 aa).

Residues 2–81 form the GST N-terminal domain; sequence PPYTVVYFPV…HLGRTLGLYG (80 aa). Tyr4 carries the post-translational modification Phosphotyrosine; by EGFR. Residues Tyr8, Arg14, Trp39, Lys45, and 52-53 contribute to the glutathione site; that span reads QL. Thr62 carries the post-translational modification Phosphothreonine. 65–66 contacts glutathione; that stretch reads QS. A GST C-terminal domain is found at 83–204; the sequence is DQREAALVDM…ASPEHVNLPI (122 aa). An N6-succinyllysine mark is found at Lys103 and Lys116. N6-acetyllysine is present on Lys128.

The protein belongs to the GST superfamily. Pi family. In terms of assembly, homodimer. Interacts with CDK5.

It is found in the cytoplasm. The protein resides in the mitochondrion. It localises to the nucleus. It catalyses the reaction RX + glutathione = an S-substituted glutathione + a halide anion + H(+). The catalysed reaction is prostaglandin J2 + glutathione = prostaglandin J2-S-(R)-glutathione. It carries out the reaction prostaglandin J2 + glutathione = prostaglandin J2-S-(S)-glutathione. The enzyme catalyses prostaglandin A2 + glutathione = prostaglandin A2-S-(S)-glutathione. It catalyses the reaction 11(S)-hydroxy-14(S),15(S)-epoxy-(5Z,8Z,12E)-eicosatrienoate + glutathione = (11S,15S)-dihydroxy-14(R)-S-glutathionyl-(5Z,8Z,12E)-eicosatrienoate. Conjugation of reduced glutathione to a wide number of exogenous and endogenous hydrophobic electrophiles. Involved in the formation of glutathione conjugates of both prostaglandin A2 (PGA2) and prostaglandin J2 (PGJ2). Participates in the formation of novel hepoxilin regioisomers. Negatively regulates CDK5 activity via p25/p35 translocation to prevent neurodegeneration. The protein is Glutathione S-transferase P (GSTP1) of Macaca mulatta (Rhesus macaque).